We begin with the raw amino-acid sequence, 404 residues long: ATP phosphoribosyltransferase regulatory subunit (404 aa).

Belongs to the class-II aminoacyl-tRNA synthetase family. HisZ subfamily. In terms of assembly, heteromultimer composed of HisG and HisZ subunits.

Its subcellular location is the cytoplasm. Its pathway is amino-acid biosynthesis; L-histidine biosynthesis; L-histidine from 5-phospho-alpha-D-ribose 1-diphosphate: step 1/9. Required for the first step of histidine biosynthesis. May allow the feedback regulation of ATP phosphoribosyltransferase activity by histidine. In Trichormus variabilis (strain ATCC 29413 / PCC 7937) (Anabaena variabilis), this protein is ATP phosphoribosyltransferase regulatory subunit.